The primary structure comprises 481 residues: MAEKITSRAQDYSQWYIDIVRFAKLADYSDVRGCMVIRPNGYAIWEKMQAALDRMFKETGHVNAYFPLFIPESFIQKEAEHIEGFAPECAVVTHGGGEELQEKLYVRPTSETIIWSSYKKWIQSYRDLPILINQWANVVRWEMRTRLFLRTTEFLWQEGHTAHATETEAKEEVLRMIEVYRHFAEEYMAIPVIVGMKTESEKFAGAHETFCIEAMMQDGKALQAGTSHHLGQNFAKAFDCKFQTKDGSLEYVWASSWGVSTRLIGALIMAHSDDKGLVLPPKLASRQAVIVPILKGDKAAVLEKAVELEKMLKAAGVQVFLDDSEQNTPGWKFAEYELQGIPVRIELGPRDVAAGKCVVARRDTSEKETLEIDTAFPQKIKDLLDSIQTGLFERALRFREEKTKVVTTYEELKAQVEVGFAVAHWDGTPETEAKIKEETKATIRCLPVSKDFATKYGINTEGKCVFSGNPSKQMVVFAKAY.

The protein belongs to the class-II aminoacyl-tRNA synthetase family. ProS type 3 subfamily. As to quaternary structure, homodimer.

It localises to the cytoplasm. It carries out the reaction tRNA(Pro) + L-proline + ATP = L-prolyl-tRNA(Pro) + AMP + diphosphate. Its function is as follows. Catalyzes the attachment of proline to tRNA(Pro) in a two-step reaction: proline is first activated by ATP to form Pro-AMP and then transferred to the acceptor end of tRNA(Pro). The sequence is that of Proline--tRNA ligase from Chloroherpeton thalassium (strain ATCC 35110 / GB-78).